Consider the following 139-residue polypeptide: Large ribosomal subunit protein uL16 (139 aa).

Positions 1–21 are enriched in basic residues; that stretch reads MLSPRKTKFRKQHRGRMRGKA. Residues 1-23 form a disordered region; the sequence is MLSPRKTKFRKQHRGRMRGKATR.

Belongs to the universal ribosomal protein uL16 family. In terms of assembly, part of the 50S ribosomal subunit.

Binds 23S rRNA and is also seen to make contacts with the A and possibly P site tRNAs. The protein is Large ribosomal subunit protein uL16 of Acaryochloris marina (strain MBIC 11017).